The sequence spans 184 residues: Photosystem I assembly protein Ycf4 (184 aa).

2 helical membrane passes run 22 to 42 (FCWACILFLGSIGFLLVGISS) and 57 to 77 (ILFFPQGIVMCFYGIAGLFIS).

The protein belongs to the Ycf4 family.

It is found in the plastid. Its subcellular location is the chloroplast thylakoid membrane. Seems to be required for the assembly of the photosystem I complex. The polypeptide is Photosystem I assembly protein Ycf4 (Illicium oligandrum (Star anise)).